Here is a 217-residue protein sequence, read N- to C-terminus: Uracil-DNA glycosylase (217 aa).

Asp62 serves as the catalytic Proton acceptor.

Belongs to the uracil-DNA glycosylase (UDG) superfamily. UNG family.

It is found in the cytoplasm. It carries out the reaction Hydrolyzes single-stranded DNA or mismatched double-stranded DNA and polynucleotides, releasing free uracil.. In terms of biological role, excises uracil residues from the DNA which can arise as a result of misincorporation of dUMP residues by DNA polymerase or due to deamination of cytosine. The chain is Uracil-DNA glycosylase from Streptococcus pneumoniae (strain Hungary19A-6).